The sequence spans 477 residues: Glycogen synthase (477 aa).

Lys15 is an ADP-alpha-D-glucose binding site.

This sequence belongs to the glycosyltransferase 1 family. Bacterial/plant glycogen synthase subfamily.

The enzyme catalyses [(1-&gt;4)-alpha-D-glucosyl](n) + ADP-alpha-D-glucose = [(1-&gt;4)-alpha-D-glucosyl](n+1) + ADP + H(+). It functions in the pathway glycan biosynthesis; glycogen biosynthesis. Synthesizes alpha-1,4-glucan chains using ADP-glucose. In Shigella flexneri serotype 5b (strain 8401), this protein is Glycogen synthase.